The chain runs to 353 residues: 4-hydroxy-3-methylbut-2-en-1-yl diphosphate synthase (flavodoxin) (353 aa).

Positions 265, 268, 300, and 307 each coordinate [4Fe-4S] cluster.

This sequence belongs to the IspG family. It depends on [4Fe-4S] cluster as a cofactor.

It catalyses the reaction (2E)-4-hydroxy-3-methylbut-2-enyl diphosphate + oxidized [flavodoxin] + H2O + 2 H(+) = 2-C-methyl-D-erythritol 2,4-cyclic diphosphate + reduced [flavodoxin]. It functions in the pathway isoprenoid biosynthesis; isopentenyl diphosphate biosynthesis via DXP pathway; isopentenyl diphosphate from 1-deoxy-D-xylulose 5-phosphate: step 5/6. Converts 2C-methyl-D-erythritol 2,4-cyclodiphosphate (ME-2,4cPP) into 1-hydroxy-2-methyl-2-(E)-butenyl 4-diphosphate. This Sulfurihydrogenibium sp. (strain YO3AOP1) protein is 4-hydroxy-3-methylbut-2-en-1-yl diphosphate synthase (flavodoxin).